We begin with the raw amino-acid sequence, 196 residues long: Probable GTP-binding protein EngB (196 aa).

Residues 21-195 (DVSEICLIGR…YELINKLLGS (175 aa)) form the EngB-type G domain. Residues 29 to 36 (GRSNVGKS), 56 to 60 (GKTRL), 75 to 78 (DAPG), 142 to 145 (TKLD), and 174 to 176 (ISN) each bind GTP. The Mg(2+) site is built by serine 36 and threonine 58.

It belongs to the TRAFAC class TrmE-Era-EngA-EngB-Septin-like GTPase superfamily. EngB GTPase family. The cofactor is Mg(2+).

Functionally, necessary for normal cell division and for the maintenance of normal septation. This is Probable GTP-binding protein EngB from Mycoplasma capricolum subsp. capricolum (strain California kid / ATCC 27343 / NCTC 10154).